A 572-amino-acid polypeptide reads, in one-letter code: Glypican-5 (572 aa).

The first 24 residues, 1 to 24, serve as a signal peptide directing secretion; sequence MDARTWRLGWRCLLLLALLGSTRS. Residues asparagine 120 and asparagine 237 are each glycosylated (N-linked (GlcNAc...) asparagine). O-linked (Xyl...) (glycosaminoglycan) serine glycosylation is present at serine 486. Asparagine 493 carries an N-linked (GlcNAc...) asparagine glycan. 3 O-linked (Xyl...) (glycosaminoglycan) serine glycosylation sites follow: serine 495, serine 507, and serine 509. The N-linked (GlcNAc...) asparagine glycan is linked to asparagine 527.

This sequence belongs to the glypican family.

The protein resides in the cell membrane. The protein localises to the secreted. Its subcellular location is the extracellular space. In terms of biological role, cell surface proteoglycan that bears heparan sulfate. The sequence is that of Glypican-5 (Gpc5) from Mus musculus (Mouse).